Reading from the N-terminus, the 690-residue chain is CREB-H transcription factor homolog let-607 (690 aa).

3 disordered regions span residues 87–118 (NDNC…SSGG), 166–192 (SAVH…SNGL), and 205–253 (PASI…KYPP). Composition is skewed to low complexity over residues 100-116 (SLPI…YHSS), 170-181 (QNQQQQQRRLNQ), and 213-236 (PSSS…SSST). The bZIP domain occupies 284-347 (DLKRIRRKIR…QSVISQLKKL (64 aa)). The interval 286–321 (KRIRRKIRNKRSAQTSRKRKQDYIEQLEDRVSESTK) is basic motif. Residues 295–350 (KRSAQTSRKRKQDYIEQLEDRVSESTKENQALKQQIERLSSENQSVISQLKKLQAQ) are a coiled coil. A leucine-zipper region spans residues 326–333 (LKQQIERL). Residues 451–464 (HNNSKYPASGNQNH) show a composition bias toward polar residues. 2 disordered regions span residues 451–495 (HNNS…SMYR) and 509–536 (GARK…ATSP). Low complexity-rich tracts occupy residues 480-492 (QPKQ…HQPS) and 514-535 (SSTS…SATS).

Belongs to the bZIP family.

The protein localises to the nucleus. In terms of biological role, probable transcription factor, required during migration of the gonadal distal tip cells (DTC). Probably regulates cell adhesion of DTCs via modulation of expression of genes involved in integrin-mediated adhesion, including tln-1, src-1, and integrin pat-2. Modulates expression of genes involved in protein trafficking during embryogenesis, including emo-1, sec-61, calu-1, sec-24.1, enpl-1, sar-1 and tfg-1. This Caenorhabditis elegans protein is CREB-H transcription factor homolog let-607.